The primary structure comprises 219 residues: MGFIYDWSEERLEIQSIADDILSKFVPSHVNIFYCFGGIVLTAFIFQGASGFALTIYYRPTVVEAFSSIQLILYHVNLGWFIRSIHRWSSGCMVLVLILHISRVYLTGGFKKPRELTWISGVILAVVTVSFGVTGYSLPWDQIGYWACKIVTAVPEALDDLLPGAGKLLVLTLRGGFSVGQTTLTRLYSIHTFVLPLVTLVLLIVHFSLLRKQGISGPL.

Residues 32 to 52 (IFYCFGGIVLTAFIFQGASGF) traverse the membrane as a helical segment. Cys-35 serves as a coordination point for heme c. Positions 86 and 100 each coordinate heme b. A run of 3 helical transmembrane segments spans residues 90 to 110 (SGCM…TGGF), 116 to 136 (LTWI…VTGY), and 190 to 210 (IHTF…FSLL). Positions 191 and 206 each coordinate heme b.

Belongs to the cytochrome b family. PetB subfamily. As to quaternary structure, the 4 large subunits of the cytochrome b6-f complex are cytochrome b6, subunit IV (17 kDa polypeptide, PetD), cytochrome f and the Rieske protein, while the 4 small subunits are PetG, PetL, PetM and PetN. The complex functions as a dimer. It depends on heme b as a cofactor. Heme c is required as a cofactor.

The protein resides in the plastid. It localises to the chloroplast thylakoid membrane. Functionally, component of the cytochrome b6-f complex, which mediates electron transfer between photosystem II (PSII) and photosystem I (PSI), cyclic electron flow around PSI, and state transitions. In Heterocapsa triquetra (Dinoflagellate), this protein is Cytochrome b6.